The chain runs to 360 residues: D-alanine--D-alanine ligase (360 aa).

Residues 146–352 (KLCVADAGIA…FPELAERLLQ (207 aa)) form the ATP-grasp domain. 179–234 (EEKFIYPFFVKPANLGSSIGISKVHHREQLPAALKSACSLDSKIVVEKAITGREIE) is an ATP binding site. 3 residues coordinate Mg(2+): D305, E319, and N321.

It belongs to the D-alanine--D-alanine ligase family. Mg(2+) serves as cofactor. It depends on Mn(2+) as a cofactor.

It is found in the cytoplasm. It catalyses the reaction 2 D-alanine + ATP = D-alanyl-D-alanine + ADP + phosphate + H(+). It functions in the pathway cell wall biogenesis; peptidoglycan biosynthesis. In terms of biological role, cell wall formation. The chain is D-alanine--D-alanine ligase from Pelodictyon phaeoclathratiforme (strain DSM 5477 / BU-1).